The following is a 277-amino-acid chain: Ribosomal RNA small subunit methyltransferase A (277 aa).

S-adenosyl-L-methionine-binding residues include His15, Leu17, Gly42, Glu64, Asp89, and Asn109.

It belongs to the class I-like SAM-binding methyltransferase superfamily. rRNA adenine N(6)-methyltransferase family. RsmA subfamily.

It is found in the cytoplasm. The enzyme catalyses adenosine(1518)/adenosine(1519) in 16S rRNA + 4 S-adenosyl-L-methionine = N(6)-dimethyladenosine(1518)/N(6)-dimethyladenosine(1519) in 16S rRNA + 4 S-adenosyl-L-homocysteine + 4 H(+). In terms of biological role, specifically dimethylates two adjacent adenosines (A1518 and A1519) in the loop of a conserved hairpin near the 3'-end of 16S rRNA in the 30S particle. May play a critical role in biogenesis of 30S subunits. This chain is Ribosomal RNA small subunit methyltransferase A, found in Synechococcus sp. (strain CC9311).